The primary structure comprises 116 residues: SGSCSLKTCWLQLADFRKVGNALKEKYDSATAMKLNGRGKLVQVNSRFNTPTTLDLVYVDQSPDYCVRNESTGSLGTQGRLCNKTSEGMDGCALMCCGRGYDQFKTVRTERCHCKF.

A lipid anchor (O-palmitoleoyl serine; by PORCN) is attached at S1. 2 N-linked (GlcNAc...) asparagine glycosylation sites follow: N69 and N83. A disulfide bridge connects residues C82 and C97.

This sequence belongs to the Wnt family. Post-translationally, palmitoleoylation is required for efficient binding to frizzled receptors. Depalmitoleoylation leads to Wnt signaling pathway inhibition.

The protein localises to the secreted. The protein resides in the extracellular space. It is found in the extracellular matrix. Ligand for members of the frizzled family of seven transmembrane receptors. Can activate or inhibit canonical Wnt signaling, depending on receptor context. Required during embryogenesis for extension of the primary anterior-posterior axis. This Alopias vulpinus (Common thresher shark) protein is Protein Wnt-5a (WNT-5A).